Here is a 116-residue protein sequence, read N- to C-terminus: Large ribosomal subunit protein bL19 (116 aa).

The protein belongs to the bacterial ribosomal protein bL19 family.

This protein is located at the 30S-50S ribosomal subunit interface and may play a role in the structure and function of the aminoacyl-tRNA binding site. This Pasteurella multocida (strain Pm70) protein is Large ribosomal subunit protein bL19.